The sequence spans 109 residues: Large ribosomal subunit protein uL22 (109 aa).

This sequence belongs to the universal ribosomal protein uL22 family. Part of the 50S ribosomal subunit.

Functionally, this protein binds specifically to 23S rRNA; its binding is stimulated by other ribosomal proteins, e.g. L4, L17, and L20. It is important during the early stages of 50S assembly. It makes multiple contacts with different domains of the 23S rRNA in the assembled 50S subunit and ribosome. The globular domain of the protein is located near the polypeptide exit tunnel on the outside of the subunit, while an extended beta-hairpin is found that lines the wall of the exit tunnel in the center of the 70S ribosome. In Psychrobacter cryohalolentis (strain ATCC BAA-1226 / DSM 17306 / VKM B-2378 / K5), this protein is Large ribosomal subunit protein uL22.